We begin with the raw amino-acid sequence, 102 residues long: Phosphoribosyl-ATP pyrophosphatase (102 aa).

The protein belongs to the PRA-PH family.

It is found in the cytoplasm. The catalysed reaction is 1-(5-phospho-beta-D-ribosyl)-ATP + H2O = 1-(5-phospho-beta-D-ribosyl)-5'-AMP + diphosphate + H(+). It participates in amino-acid biosynthesis; L-histidine biosynthesis; L-histidine from 5-phospho-alpha-D-ribose 1-diphosphate: step 2/9. This is Phosphoribosyl-ATP pyrophosphatase from Jannaschia sp. (strain CCS1).